A 149-amino-acid chain; its full sequence is UPF0178 protein NT01CX_0440 (149 aa).

Belongs to the UPF0178 family.

This chain is UPF0178 protein NT01CX_0440, found in Clostridium novyi (strain NT).